We begin with the raw amino-acid sequence, 124 residues long: MRHYEIVFIVHPDQSEQVPAMIERYKTTITSHGGQIHRVEDWGRRQLAYMIEKLAKAHYVCMNIECDQTTLDELEHAFKFNDAVLRHLIVKMKKAETGPSPMMKEVQREEAKKAAAAQPTEAQA.

A disordered region spans residues 96 to 124; that stretch reads ETGPSPMMKEVQREEAKKAAAAQPTEAQA. Positions 114-124 are enriched in low complexity; sequence AAAAQPTEAQA.

The protein belongs to the bacterial ribosomal protein bS6 family.

Its function is as follows. Binds together with bS18 to 16S ribosomal RNA. The protein is Small ribosomal subunit protein bS6 of Burkholderia lata (strain ATCC 17760 / DSM 23089 / LMG 22485 / NCIMB 9086 / R18194 / 383).